The following is a 406-amino-acid chain: uncharacterized protein (406 aa).

The protein belongs to the glycosyltransferase group 1 family. Glycosyltransferase 4 subfamily.

This is an uncharacterized protein from Methanocaldococcus jannaschii (strain ATCC 43067 / DSM 2661 / JAL-1 / JCM 10045 / NBRC 100440) (Methanococcus jannaschii).